The chain runs to 432 residues: Adenylosuccinate synthetase (432 aa).

GTP-binding positions include 13–19 (GDEGKGK) and 41–43 (GHT). D14 functions as the Proton acceptor in the catalytic mechanism. Mg(2+) is bound by residues D14 and G41. Residues 14 to 17 (DEGK), 39 to 42 (NAGH), T130, R144, Q225, T240, and R304 each bind IMP. H42 serves as the catalytic Proton donor. Position 300–306 (300–306 (AVTGRPR)) interacts with substrate. GTP contacts are provided by residues R306, 332-334 (KLD), and 415-417 (STG).

The protein belongs to the adenylosuccinate synthetase family. Homodimer. Mg(2+) serves as cofactor.

The protein localises to the cytoplasm. The catalysed reaction is IMP + L-aspartate + GTP = N(6)-(1,2-dicarboxyethyl)-AMP + GDP + phosphate + 2 H(+). The protein operates within purine metabolism; AMP biosynthesis via de novo pathway; AMP from IMP: step 1/2. Its function is as follows. Plays an important role in the de novo pathway of purine nucleotide biosynthesis. Catalyzes the first committed step in the biosynthesis of AMP from IMP. This is Adenylosuccinate synthetase from Histophilus somni (strain 129Pt) (Haemophilus somnus).